We begin with the raw amino-acid sequence, 156 residues long: Small ribosomal subunit protein uS7 (156 aa).

Belongs to the universal ribosomal protein uS7 family. In terms of assembly, part of the 30S ribosomal subunit. Contacts proteins S9 and S11.

In terms of biological role, one of the primary rRNA binding proteins, it binds directly to 16S rRNA where it nucleates assembly of the head domain of the 30S subunit. Is located at the subunit interface close to the decoding center, probably blocks exit of the E-site tRNA. The chain is Small ribosomal subunit protein uS7 from Finegoldia magna (strain ATCC 29328 / DSM 20472 / WAL 2508) (Peptostreptococcus magnus).